The following is a 520-amino-acid chain: 2-isopropylmalate synthase (520 aa).

The Pyruvate carboxyltransferase domain maps to 5 to 267 (VIIFDTTLRD…HTNINHQEIY (263 aa)). 4 residues coordinate Mn(2+): Asp-14, His-202, His-204, and Asn-238. The segment at 392-520 (RLDYFSVQSG…RLQQNNQEMV (129 aa)) is regulatory domain.

The protein belongs to the alpha-IPM synthase/homocitrate synthase family. LeuA type 1 subfamily. Homodimer. Mn(2+) serves as cofactor.

The protein resides in the cytoplasm. The enzyme catalyses 3-methyl-2-oxobutanoate + acetyl-CoA + H2O = (2S)-2-isopropylmalate + CoA + H(+). It functions in the pathway amino-acid biosynthesis; L-leucine biosynthesis; L-leucine from 3-methyl-2-oxobutanoate: step 1/4. Catalyzes the condensation of the acetyl group of acetyl-CoA with 3-methyl-2-oxobutanoate (2-ketoisovalerate) to form 3-carboxy-3-hydroxy-4-methylpentanoate (2-isopropylmalate). This is 2-isopropylmalate synthase from Yersinia enterocolitica serotype O:8 / biotype 1B (strain NCTC 13174 / 8081).